Reading from the N-terminus, the 203-residue chain is Small ribosomal subunit protein uS4 (203 aa).

In terms of domain architecture, S4 RNA-binding spans Arg93–Val156.

The protein belongs to the universal ribosomal protein uS4 family. Part of the 30S ribosomal subunit. Contacts protein S5. The interaction surface between S4 and S5 is involved in control of translational fidelity.

In terms of biological role, one of the primary rRNA binding proteins, it binds directly to 16S rRNA where it nucleates assembly of the body of the 30S subunit. Functionally, with S5 and S12 plays an important role in translational accuracy. This is Small ribosomal subunit protein uS4 from Streptococcus uberis (strain ATCC BAA-854 / 0140J).